Reading from the N-terminus, the 135-residue chain is UPF0102 protein Mkms_2031 (135 aa).

The protein belongs to the UPF0102 family.

The sequence is that of UPF0102 protein Mkms_2031 from Mycobacterium sp. (strain KMS).